The following is a 305-amino-acid chain: tRNA dimethylallyltransferase (305 aa).

8-15 is an ATP binding site; it reads GPTAVGKT. Residue 10–15 participates in substrate binding; the sequence is TAVGKT. Residues 33-36 are interaction with substrate tRNA; it reads DSRQ.

The protein belongs to the IPP transferase family. As to quaternary structure, monomer. Mg(2+) serves as cofactor.

It carries out the reaction adenosine(37) in tRNA + dimethylallyl diphosphate = N(6)-dimethylallyladenosine(37) in tRNA + diphosphate. Functionally, catalyzes the transfer of a dimethylallyl group onto the adenine at position 37 in tRNAs that read codons beginning with uridine, leading to the formation of N6-(dimethylallyl)adenosine (i(6)A). This chain is tRNA dimethylallyltransferase, found in Thermotoga petrophila (strain ATCC BAA-488 / DSM 13995 / JCM 10881 / RKU-1).